Consider the following 254-residue polypeptide: Metalloprotease YcaL (254 aa).

Residues 1 to 19 (MKNTKLLLAIATSAALLTG) form the signal peptide. C20 carries the N-palmitoyl cysteine lipid modification. C20 is lipidated: S-diacylglycerol cysteine. H134 is a binding site for Zn(2+). E135 is an active-site residue. 2 residues coordinate Zn(2+): H138 and E193. The interval 227 to 254 (GRTQSMFDSHPPSTERAQHIRDRIASGK) is disordered. Residues 242–254 (RAQHIRDRIASGK) show a composition bias toward basic and acidic residues.

Belongs to the peptidase M48B family. The cofactor is Zn(2+).

It localises to the cell inner membrane. Its function is as follows. Involved in the degradation of the LPS-assembly protein LptD. Degrades LptD that have engaged the Bam complex but are stalled at an early step in the outer membrane protein assembly process. The protein is Metalloprotease YcaL (ycaL) of Escherichia coli (strain K12).